A 459-amino-acid chain; its full sequence is C-type lectin domain family 14 member A (459 aa).

A signal peptide spans 1–21; that stretch reads MRPALALCLLCPAFWPRPGNG. Over 22–386 the chain is Extracellular; sequence EHPTADRAAC…VSLTFDTSST (365 aa). The 141-residue stretch at 33–173 folds into the C-type lectin domain; sequence ASGACYSLHH…LRTDGYLCKY (141 aa). A disulfide bridge connects residues C143 and C162. N-linked (GlcNAc...) asparagine glycosylation occurs at N189. Residues 246 to 288 form the EGF-like domain; it reads PCSGRYLLAGKCVELPDCLDHLGDFTCECAVGFELGKDGRSCE. Residues N306, N317, and N370 are each glycosylated (N-linked (GlcNAc...) asparagine). The chain crosses the membrane as a helical span at residues 387 to 407; the sequence is VVFILVSIAVIVLVVLTITVL. Over 408–459 the chain is Cytoplasmic; it reads GLFKLCFHKSRSSRTGKGALDSPGVECDAEATSLHHSSTQCTDIGVKSGTVA. S440 bears the Phosphoserine mark.

The protein localises to the membrane. The polypeptide is C-type lectin domain family 14 member A (Clec14a) (Mus musculus (Mouse)).